An 806-amino-acid polypeptide reads, in one-letter code: Sperm head and tail associated protein (806 aa).

Disordered regions lie at residues 1 to 36 (MNSS…PSSC), 257 to 329 (TPAS…MSGS), 428 to 496 (LNNQ…CPQP), and 707 to 806 (SQIN…SKKK). A compositionally biased stretch (polar residues) spans 13–27 (APSTSPQADCPNNYS). The segment covering 277 to 290 (PPLSSASSPPSGNP) has biased composition (low complexity). Residues 320–329 (LSSQAGMSGS) show a composition bias toward polar residues. An interaction with CRISP2 region spans residues 521–806 (KEPPPETAVL…QIKSPHSKKK (286 aa)). 2 stretches are compositionally biased toward low complexity: residues 710-723 (NHQN…KNSS) and 733-754 (RRGA…SSTQ). Residues 773 to 788 (QSQSPADGKIESQSKS) show a composition bias toward polar residues.

As to quaternary structure, interacts with CRISP2. Isoforms 3 and 4 are expressed in testis (at protein level).

It is found in the cytoplasm. Plays a role during spermatogenesis. The chain is Sperm head and tail associated protein (Nsun4) from Mus musculus (Mouse).